The primary structure comprises 171 residues: Protein X (171 aa).

The next 3 helical transmembrane spans lie at 11–31 (SWYQIFIAFSLTYTPIAIYSL), 38–58 (LAGIVNIFIFINCCVSFVYLM), and 73–93 (AVIALVWGIYTLVKIVDWLVI).

Its subcellular location is the virion membrane. This Mus musculus domesticus (western European house mouse) protein is Protein X (VPX).